A 189-amino-acid chain; its full sequence is Probable nicotinate-nucleotide adenylyltransferase (189 aa).

It belongs to the NadD family.

It carries out the reaction nicotinate beta-D-ribonucleotide + ATP + H(+) = deamido-NAD(+) + diphosphate. The protein operates within cofactor biosynthesis; NAD(+) biosynthesis; deamido-NAD(+) from nicotinate D-ribonucleotide: step 1/1. In terms of biological role, catalyzes the reversible adenylation of nicotinate mononucleotide (NaMN) to nicotinic acid adenine dinucleotide (NaAD). The polypeptide is Probable nicotinate-nucleotide adenylyltransferase (Bacillus cytotoxicus (strain DSM 22905 / CIP 110041 / 391-98 / NVH 391-98)).